A 615-amino-acid chain; its full sequence is MTKTNKIIGIDLGTTNSCVAVMEGGEAKVIPNAEGGRTTPSVVSFKGDEIMVGEIAKRQVITNPNTISSIKRHMGEANYTVNVGGKKYTPQEISAMILANLKKTAEDYLGAQVSEAVITVPAYFNDAQRQATKDAGKIAGLNVKRIINEPTAAALSYGVDKGDKEQTILVFDLGGGTFDVSILTLVDGTFEVLSTSGDNALGGDDFDLRIVDFLVQEFKKENSVDLSKDKMAMQRLKDAAEKAKKELSGVTSSQISLPFLTMSEAGPLHLEYNMTRAKFNELTKDLIDRCLAPVKRALGDAKLDIEKIDQVLLVGGSTRIPAVQDLVKNELKKTPNKSINPDEVVGIGAAIQGGILSGDVKDILTLLDVTPLSLGIETLGNVFTKLIERNSTIPTSEKQVFSTAADNLPAVDIHVLQGERPLAADNKTLGRFQLTDRPPHRAEFLKLKITFDLDANGIVSVKAKDLGTNKEQKITISGSGALKEEEIQRMIREAEENAEVDRVKKESIDARNEAENMIFHTKKSLEDLKADVTPEEKDKVETQIKELEEALKGDDTALIKEKTASLTKESQGIAMKAYQKAQEKQAQEKGTQENTTAKNEKPQDEVVDADFEEKK.

A Phosphothreonine; by autocatalysis modification is found at Thr-177. Residues 567–615 (TKESQGIAMKAYQKAQEKQAQEKGTQENTTAKNEKPQDEVVDADFEEKK) are disordered. Positions 581-591 (AQEKQAQEKGT) are enriched in basic and acidic residues. Positions 605-615 (EVVDADFEEKK) are enriched in acidic residues.

It belongs to the heat shock protein 70 family.

Its function is as follows. Acts as a chaperone. This is Chaperone protein DnaK from Onion yellows phytoplasma (strain OY-M).